A 389-amino-acid polypeptide reads, in one-letter code: 3-oxo-Delta(4,5)-steroid 5-beta-reductase (389 aa).

NADP(+)-binding positions include 35-37 (TGI), 63-64 (RR), 81-82 (DI), Thr105, and Gln143. Residues Lys147 and Tyr179 contribute to the active site. NADP(+) contacts are provided by residues Tyr179, Ile206, and 213–215 (SMM).

Belongs to the short-chain dehydrogenases/reductases (SDR) family. Highly divergent. As to quaternary structure, homodimer.

It carries out the reaction 5beta-cholestan-3-one + NADP(+) = cholest-4-en-3-one + NADPH + H(+). The catalysed reaction is 4,5beta-dihydrocortisone + NADP(+) = cortisone + NADPH + H(+). In terms of biological role, involved in cardenolide biosynthesis. Catalyzes the stereospecific conversion of progesterone to 5-beta-pregnane-3,20-dione. Can use progesterone, testosterone, 4-androstene-3,17-dione, cortisol and cortisone as substrates, but not pregnenolone, 21-OH-pregnenolone or isoprogesterone. NADPH could not be replaced by NADH. This chain is 3-oxo-Delta(4,5)-steroid 5-beta-reductase, found in Digitalis lanata (Grecian foxglove).